The chain runs to 334 residues: D-fructose 1,6-bisphosphatase class 2/sedoheptulose 1,7-bisphosphatase (334 aa).

Mn(2+)-binding residues include aspartate 33, glutamate 57, aspartate 85, and glutamate 88. Substrate-binding positions include 88–90, tyrosine 119, 164–166, and 186–188; these read EGT, RAR, and DGD. Residue glutamate 213 coordinates Mn(2+).

This sequence belongs to the FBPase class 2 family. Homotetramer. The cofactor is Mn(2+).

It catalyses the reaction beta-D-fructose 1,6-bisphosphate + H2O = beta-D-fructose 6-phosphate + phosphate. It carries out the reaction D-sedoheptulose 1,7-bisphosphate + H2O = D-sedoheptulose 7-phosphate + phosphate. Its pathway is carbohydrate biosynthesis; Calvin cycle. Its function is as follows. Catalyzes the hydrolysis of fructose 1,6-bisphosphate (Fru 1,6-P2) and sedoheptulose 1,7-bisphosphate (Sed 1,7-P2) to fructose 6-phosphate and sedoheptulose 7-phosphate, respectively. The chain is D-fructose 1,6-bisphosphatase class 2/sedoheptulose 1,7-bisphosphatase from Prochlorococcus marinus (strain NATL1A).